The chain runs to 801 residues: Probable inorganic carbon transporter subunit DabA (801 aa).

4 residues coordinate Zn(2+): Cys298, Asp300, His481, and Cys496. A disordered region spans residues 575–596 (RENAAAERAESMGSDASSGVSE).

The protein belongs to the inorganic carbon transporter (TC 9.A.2) DabA family. In terms of assembly, forms a complex with DabB. It depends on Zn(2+) as a cofactor.

The protein resides in the cell membrane. Part of an energy-coupled inorganic carbon pump. The chain is Probable inorganic carbon transporter subunit DabA from Haloarcula marismortui (strain ATCC 43049 / DSM 3752 / JCM 8966 / VKM B-1809) (Halobacterium marismortui).